The chain runs to 176 residues: Urease accessory protein UreE (176 aa).

The interval 147–176 is disordered; it reads AGAYQQGGGHSHGHAHSHSHEKPHSHTHNH.

This sequence belongs to the UreE family.

It is found in the cytoplasm. In terms of biological role, involved in urease metallocenter assembly. Binds nickel. Probably functions as a nickel donor during metallocenter assembly. This is Urease accessory protein UreE from Alcanivorax borkumensis (strain ATCC 700651 / DSM 11573 / NCIMB 13689 / SK2).